Here is a 224-residue protein sequence, read N- to C-terminus: Large ribosomal subunit protein uL1 (224 aa).

Belongs to the universal ribosomal protein uL1 family. Part of the 50S ribosomal subunit.

Functionally, binds directly to 23S rRNA. The L1 stalk is quite mobile in the ribosome, and is involved in E site tRNA release. Protein L1 is also a translational repressor protein, it controls the translation of the L11 operon by binding to its mRNA. The protein is Large ribosomal subunit protein uL1 of Borrelia duttonii (strain Ly).